The primary structure comprises 273 residues: Shikimate dehydrogenase (NADP(+)) (273 aa).

Shikimate contacts are provided by residues 14 to 16 and Thr-61; that span reads SKS. Catalysis depends on Lys-65, which acts as the Proton acceptor. Residue Glu-77 coordinates NADP(+). Residues Asn-86 and Asp-102 each coordinate shikimate. Residues 126 to 130, 150 to 155, and Met-214 contribute to the NADP(+) site; these read GAGGA and NRTLSK. A shikimate-binding site is contributed by Tyr-216. Gly-238 serves as a coordination point for NADP(+).

It belongs to the shikimate dehydrogenase family. In terms of assembly, homodimer.

It carries out the reaction shikimate + NADP(+) = 3-dehydroshikimate + NADPH + H(+). The protein operates within metabolic intermediate biosynthesis; chorismate biosynthesis; chorismate from D-erythrose 4-phosphate and phosphoenolpyruvate: step 4/7. Its function is as follows. Involved in the biosynthesis of the chorismate, which leads to the biosynthesis of aromatic amino acids. Catalyzes the reversible NADPH linked reduction of 3-dehydroshikimate (DHSA) to yield shikimate (SA). This chain is Shikimate dehydrogenase (NADP(+)), found in Photobacterium profundum (strain SS9).